A 268-amino-acid polypeptide reads, in one-letter code: Nickel import ATP-binding protein NikE (268 aa).

In terms of domain architecture, ABC transporter spans 4-252; that stretch reads LNVCGLSHHY…SSDAGRVLQN (249 aa). 45 to 52 serves as a coordination point for ATP; it reads GRSGCGKS.

Belongs to the ABC transporter superfamily. Nickel importer (TC 3.A.1.5.3) family. The complex is composed of two ATP-binding proteins (NikD and NikE), two transmembrane proteins (NikB and NikC) and a solute-binding protein (NikA).

The protein resides in the cell inner membrane. It catalyses the reaction Ni(2+)(out) + ATP + H2O = Ni(2+)(in) + ADP + phosphate + H(+). Its function is as follows. Part of the ABC transporter complex NikABCDE involved in nickel import. Responsible for energy coupling to the transport system. This Shigella flexneri protein is Nickel import ATP-binding protein NikE.